The chain runs to 2006 residues: E3 ubiquitin-protein ligase PRT6 (2006 aa).

The UBR-type zinc-finger motif lies at 119–189 (GVCGSVWGQN…PDGFCSNHKG (71 aa)). Disordered stretches follow at residues 1167-1186 (LSSSMDDDDPRSEFETSDSV) and 1338-1380 (DHQP…AGSD). Residues 1338–1348 (DHQPHEAENCS) show a composition bias toward basic and acidic residues. A compositionally biased stretch (polar residues) spans 1349 to 1360 (EKNSVGGPSTLQ). Over residues 1364-1377 (PDIRSRQTSRRPDA) the composition is skewed to basic and acidic residues. The RING-type; degenerate zinc finger occupies 1395 to 1440 (CGHAVHQSCLERYLKSLKERSGRRTVFEGAHIVDLKKKEFLCPVCR).

It belongs to the E3 ubiquitin-protein ligase UBR1-like family.

The catalysed reaction is S-ubiquitinyl-[E2 ubiquitin-conjugating enzyme]-L-cysteine + [acceptor protein]-L-lysine = [E2 ubiquitin-conjugating enzyme]-L-cysteine + N(6)-ubiquitinyl-[acceptor protein]-L-lysine.. The protein operates within protein modification; protein ubiquitination. Functionally, ubiquitin protein ligase which is a component of the N-end rule pathway with arginine specificity, and functions with the arginyltransferases ATE1 and ATE2. Recognizes and binds to proteins bearing specific N-terminal residues that are destabilizing according to the N-end rule, leading to their ubiquitination and subsequent degradation. Does not participate in degradation of proteins with N-terminal Phe or Leu. The N-end rule pathway regulates seed after-ripening, seedling sugar sensitivity, seedling lipid breakdown, and abscisic acid (ABA) sensitivity of germination. The N-end rule pathway regulates various aspects of leaf and shoot development. Involved in the ubiquitination and subsequent degradation of RAP2-12, an activator of hypoxic gene expression. The ubiquitination occurs after the N-arginylation of RAP2-12 by ATE1 or ATE2 under aerobic conditions. The end-rule pathway plays a role in regulating the timing and amplitude of the immune response following infection with the bacterial pathogen Pseudomonas syringae pv tomato. Regulates the biosynthesis of plant-defense metabolites such as glucosinolates, and the biosynthesis and response to the phytohormone jasmonate (JA), which plays a key role in plant immunity. Controls the expression of specific defense-response genes, activates the synthesis pathway for the phytoalexin camalexin, and influences basal resistance to the hemibiotroph pathogen Pseudomonas syringae pv tomato. Coordinates the mobilization of seed storage reserves and regulates the abundance and activities of several proteases following seed germination. The chain is E3 ubiquitin-protein ligase PRT6 from Arabidopsis thaliana (Mouse-ear cress).